Consider the following 88-residue polypeptide: UPF0237 protein SMU_72 (88 aa).

One can recognise an ACT domain in the interval 4-77 (IITVVGKDRT…ETLNVKINIQ (74 aa)).

The protein belongs to the UPF0237 family. As to quaternary structure, homodimer.

This is UPF0237 protein SMU_72 from Streptococcus mutans serotype c (strain ATCC 700610 / UA159).